The sequence spans 361 residues: Innexin inx1 (361 aa).

The Cytoplasmic segment spans residues 1-28; sequence MYKLLGGLKEYLKWQDIVTDNAIFRLHN. Residues 29–49 form a helical membrane-spanning segment; the sequence is LFTTVLLLTCSLIITATQYVG. Topologically, residues 50-109 are extracellular; sequence NPIHCIVNGLPVRPINTYCWITSTFTMPDAFLRQVGSEVAHPGVANDFGDEDAKKYYTYY. The helical transmembrane segment at 110 to 130 threads the bilayer; the sequence is QWVCFVLFFQAMLCYTPKWIW. Over 131–181 the chain is Cytoplasmic; that stretch reads DSIEGGLLRTLIMGLNRGLCQDDEKCMKKKALIEYLLRHIKRHNMYALKYW. Residues 182–202 form a helical membrane-spanning segment; it reads FCETLCLVNIIGQLYLMNHFF. The Extracellular portion of the chain corresponds to 203-267; that stretch reads DGEFFSYGLR…LPLNIVNEKT (65 aa). A helical transmembrane segment spans residues 268–288; sequence YIFLWFWYIILAALLSVLVVY. The Cytoplasmic segment spans residues 289–361; the sequence is RAVILAVPSV…KIETPSSNNP (73 aa).

This sequence belongs to the pannexin family. In terms of tissue distribution, expressed in embryonic neural precursors including the dorsal median neuroblast, glial cells, neuropilar glial ring, developing myoblasts cells and in a circumferential band of epithelial cells at the trochanter/coxa boundary stripe in the developing limb.

The protein localises to the cell membrane. The protein resides in the cell junction. Its subcellular location is the gap junction. In terms of biological role, structural components of the gap junctions. The sequence is that of Innexin inx1 (inx1) from Schistocerca americana (American grasshopper).